The primary structure comprises 222 residues: N-(5'-phosphoribosyl)anthranilate isomerase (222 aa).

This sequence belongs to the TrpF family.

The enzyme catalyses N-(5-phospho-beta-D-ribosyl)anthranilate = 1-(2-carboxyphenylamino)-1-deoxy-D-ribulose 5-phosphate. It participates in amino-acid biosynthesis; L-tryptophan biosynthesis; L-tryptophan from chorismate: step 3/5. The protein is N-(5'-phosphoribosyl)anthranilate isomerase of Gloeobacter violaceus (strain ATCC 29082 / PCC 7421).